The primary structure comprises 437 residues: Enolase 2 (437 aa).

Residue K60 forms a Glycyl lysine isopeptide (Lys-Gly) (interchain with G-Cter in ubiquitin) linkage. A Phosphoserine modification is found at S138. H160 is an active-site residue. Residue S188 is modified to Phosphoserine. K243 is covalently cross-linked (Glycyl lysine isopeptide (Lys-Gly) (interchain with G-Cter in ubiquitin)). Positions 247 and 296 each coordinate Mg(2+). T313 is modified (phosphothreonine). D321 contributes to the Mg(2+) binding site. Position 324 is a phosphothreonine (T324). K358 is covalently cross-linked (Glycyl lysine isopeptide (Lys-Gly) (interchain with G-Cter in ubiquitin)).

Belongs to the enolase family. In terms of assembly, homodimer. Requires Mg(2+) as cofactor.

Its subcellular location is the cytoplasm. It carries out the reaction (2R)-2-phosphoglycerate = phosphoenolpyruvate + H2O. The protein operates within carbohydrate degradation; glycolysis; pyruvate from D-glyceraldehyde 3-phosphate: step 4/5. This Saccharomyces cerevisiae (strain ATCC 204508 / S288c) (Baker's yeast) protein is Enolase 2 (ENO2).